An 822-amino-acid polypeptide reads, in one-letter code: BDNF/NT-3 growth factors receptor (822 aa).

The signal sequence occupies residues 1–31 (MSSWIRWHGPAMARLWGFCWLVVGFWRAAFA). 2 disulfide bridges follow: Cys-32-Cys-38 and Cys-36-Cys-45. The 30-residue stretch at 32-61 (CPTSCKCSASRIWCSDPSPGIVAFPRLEPN) folds into the LRRNT domain. The Extracellular portion of the chain corresponds to 32–430 (CPTSCKCSAS…DVTDKTGREH (399 aa)). Residues Asn-67, Asn-95, and Asn-121 are each glycosylated (N-linked (GlcNAc...) asparagine). 2 LRR repeats span residues 92 to 113 (GLRN…AFLK) and 116 to 137 (NLQH…HFRH). An LRRCT domain is found at 148-196 (NPFTCSCDIMWIKTLQEAKSSPDTQDLYCLNESSKNIPLANLQIPNCGL). Cystine bridges form between Cys-152–Cys-176 and Cys-154–Cys-194. Asn-178, Asn-205, Asn-241, Asn-254, Asn-280, Asn-325, Asn-338, and Asn-412 each carry an N-linked (GlcNAc...) asparagine glycan. 2 Ig-like C2-type domains span residues 197–282 (PSAN…VNLT) and 295–365 (PTSD…IAKN). Residues Cys-218 and Cys-266 are joined by a disulfide bond. The cysteines at positions 302 and 345 are disulfide-linked. The helical transmembrane segment at 431 to 454 (LSVYAVVVIASVVGFCLLVMLFLL) threads the bilayer. Residues 455 to 466 (KLARHSKFGMKG) form an interaction with MAPK8IP3/JIP3 region. Over 455 to 822 (KLARHSKFGM…ASPVYLDILG (368 aa)) the chain is Cytoplasmic. The tract at residues 475 to 498 (DDSASPLHHISNGSNTPSSSEGGP) is disordered. Over residues 485 to 495 (SNGSNTPSSSE) the composition is skewed to polar residues. A Phosphotyrosine; by autocatalysis modification is found at Tyr-516. Residues 538-807 (IVLKRELGEG…KNIKGIHTLL (270 aa)) form the Protein kinase domain. Residues 544–552 (LGEGAFGKV) and Lys-572 contribute to the ATP site. Residue Asp-676 is the Proton acceptor of the active site. Phosphotyrosine; by autocatalysis is present on residues Tyr-702, Tyr-706, Tyr-707, and Tyr-817.

It belongs to the protein kinase superfamily. Tyr protein kinase family. Insulin receptor subfamily. In terms of assembly, exists in a dynamic equilibrium between monomeric (low affinity) and dimeric (high affinity) structures. Interacts (phosphorylated upon activation by BDNF) with SHC1; mediates SHC1 phosphorylation and activation. Interacts (phosphorylated upon activation by BDNF) with PLCG1 and/or PLCG2; mediates PLCG1 phosphorylation and activation. Interacts with SH2B1 and SH2B2. Interacts with NGFR; may regulate the ligand specificity of the receptor. Interacts with SORCS2; this interaction is important for normal targeting to post-synaptic densities in response to high-frequency stimulation. Interacts (phosphorylated upon ligand-binding) with SH2D1A; regulates NTRK2. Interacts with SQSTM1 and KIDINS220. Interacts (phosphorylated upon ligand-binding) with FRS2; activates the MAPK signaling pathway. Interacts with APPL1. Interacts with MAPK8IP3/JIP3 and KLC1; interaction with KLC1 is mediated by MAPK8IP3/JIP3. Interacts with SORL1; this interaction facilitates NTRK2 trafficking between synaptic plasma membranes, postsynaptic densities and cell soma, hence positively regulates BDNF signaling. Interacts with SLITRK2. Phosphorylated. Undergoes ligand-mediated autophosphorylation that is required for interaction with SHC1 and PLCG1 and other downstream effectors. Isoform TrkB-T-Shc is not phosphorylated. Post-translationally, ubiquitinated. Undergoes polyubiquitination upon activation; regulated by NGFR. Ubiquitination regulates the internalization of the receptor. As to expression, isoform TrkB is expressed in the central and peripheral nervous system. In the central nervous system (CNS), expression is observed in the cerebral cortex, hippocampus, thalamus, choroid plexus, granular layer of the cerebellum, brain stem, and spinal cord. In the peripheral nervous system, it is expressed in many cranial ganglia, the ophthalmic nerve, the vestibular system, multiple facial structures, the submaxillary glands, and dorsal root ganglia. Isoform TrkB-T1 is mainly expressed in the brain but also detected in other tissues including pancreas, kidney and heart. Isoform TrkB-T-Shc is predominantly expressed in the brain.

The protein resides in the cell membrane. It localises to the endosome membrane. The protein localises to the early endosome membrane. Its subcellular location is the cell projection. It is found in the axon. The protein resides in the dendrite. It localises to the cytoplasm. The protein localises to the perinuclear region. Its subcellular location is the postsynaptic density. It catalyses the reaction L-tyrosyl-[protein] + ATP = O-phospho-L-tyrosyl-[protein] + ADP + H(+). With respect to regulation, the neuronal activity and the influx of calcium positively regulate the kinase activity and the internalization of the receptor which are both important for active signaling. Regulated by NGFR that may control the internalization of the receptor. NGFR may also stimulate the activation by BDNF compared to NTF3 and NTF4. SH2D1A inhibits the autophosphorylation of the receptor, and alters the recruitment and activation of downstream effectors and signaling cascades. The formation of active receptors dimers able to fully transduce the ligand-mediated signal, may be negatively regulated by the formation of inactive heterodimers with the non-catalytic isoforms. Functionally, receptor tyrosine kinase involved in the development and the maturation of the central and the peripheral nervous systems through regulation of neuron survival, proliferation, migration, differentiation, and synapse formation and plasticity. Receptor for BDNF/brain-derived neurotrophic factor and NTF4/neurotrophin-4. Alternatively can also bind NTF3/neurotrophin-3 which is less efficient in activating the receptor but regulates neuron survival through NTRK2. Upon ligand-binding, undergoes homodimerization, autophosphorylation and activation. Recruits, phosphorylates and/or activates several downstream effectors including SHC1, FRS2, SH2B1, SH2B2 and PLCG1 that regulate distinct overlapping signaling cascades. Through SHC1, FRS2, SH2B1, SH2B2 activates the GRB2-Ras-MAPK cascade that regulates for instance neuronal differentiation including neurite outgrowth. Through the same effectors controls the Ras-PI3 kinase-AKT1 signaling cascade that mainly regulates growth and survival. Through PLCG1 and the downstream protein kinase C-regulated pathways controls synaptic plasticity. Thereby, plays a role in learning and memory by regulating both short term synaptic function and long-term potentiation. PLCG1 also leads to NF-Kappa-B activation and the transcription of genes involved in cell survival. Hence, it is able to suppress anoikis, the apoptosis resulting from loss of cell-matrix interactions. May also play a role in neutrophin-dependent calcium signaling in glial cells and mediate communication between neurons and glia. The sequence is that of BDNF/NT-3 growth factors receptor (NTRK2) from Homo sapiens (Human).